A 196-amino-acid polypeptide reads, in one-letter code: ATP-dependent Clp protease proteolytic subunit (196 aa).

The active-site Nucleophile is the serine 98. Histidine 123 is an active-site residue.

The protein belongs to the peptidase S14 family. Fourteen ClpP subunits assemble into 2 heptameric rings which stack back to back to give a disk-like structure with a central cavity, resembling the structure of eukaryotic proteasomes.

It is found in the cytoplasm. The catalysed reaction is Hydrolysis of proteins to small peptides in the presence of ATP and magnesium. alpha-casein is the usual test substrate. In the absence of ATP, only oligopeptides shorter than five residues are hydrolyzed (such as succinyl-Leu-Tyr-|-NHMec, and Leu-Tyr-Leu-|-Tyr-Trp, in which cleavage of the -Tyr-|-Leu- and -Tyr-|-Trp bonds also occurs).. In terms of biological role, cleaves peptides in various proteins in a process that requires ATP hydrolysis. Has a chymotrypsin-like activity. Plays a major role in the degradation of misfolded proteins. The sequence is that of ATP-dependent Clp protease proteolytic subunit from Acidobacterium capsulatum (strain ATCC 51196 / DSM 11244 / BCRC 80197 / JCM 7670 / NBRC 15755 / NCIMB 13165 / 161).